Here is a 215-residue protein sequence, read N- to C-terminus: uncharacterized protein (215 aa).

An N-terminal signal peptide occupies residues 1–17; the sequence is MKKVLASATILSLMLVG. The disordered stretch occupies residues 17 to 110; that stretch reads GCSNGGNDES…NKQQQSVQDN (94 aa). Residue cysteine 18 is the site of N-palmitoyl cysteine attachment. A lipid anchor (S-diacylglycerol cysteine) is attached at cysteine 18. Basic and acidic residues predominate over residues 25 to 62; sequence ESSHKDDSSKTEQKDKSSSQHDSKKDSKRNDTNNKQDN. 2 stretches are compositionally biased toward low complexity: residues 63–76 and 91–110; these read QENN…NNQN and NSNG…VQDN.

The protein localises to the cell membrane. This is an uncharacterized protein from Staphylococcus epidermidis (strain ATCC 35984 / DSM 28319 / BCRC 17069 / CCUG 31568 / BM 3577 / RP62A).